Consider the following 337-residue polypeptide: GTP 3',8-cyclase (337 aa).

In terms of domain architecture, Radical SAM core spans 17-243 (PFQRQYYYLR…HKSHTDGPAK (227 aa)). Residue arginine 26 participates in GTP binding. [4Fe-4S] cluster-binding residues include cysteine 33 and cysteine 37. Position 39 (tyrosine 39) interacts with S-adenosyl-L-methionine. Cysteine 40 is a binding site for [4Fe-4S] cluster. Arginine 76 contacts GTP. Glycine 80 contributes to the S-adenosyl-L-methionine binding site. Threonine 107 contributes to the GTP binding site. Serine 131 lines the S-adenosyl-L-methionine pocket. Lysine 168 lines the GTP pocket. Methionine 202 contacts S-adenosyl-L-methionine. The [4Fe-4S] cluster site is built by cysteine 265 and cysteine 268. Position 270–272 (270–272 (RLR)) interacts with GTP. A [4Fe-4S] cluster-binding site is contributed by cysteine 282.

Belongs to the radical SAM superfamily. MoaA family. As to quaternary structure, monomer and homodimer. [4Fe-4S] cluster serves as cofactor.

The enzyme catalyses GTP + AH2 + S-adenosyl-L-methionine = (8S)-3',8-cyclo-7,8-dihydroguanosine 5'-triphosphate + 5'-deoxyadenosine + L-methionine + A + H(+). It functions in the pathway cofactor biosynthesis; molybdopterin biosynthesis. Functionally, catalyzes the cyclization of GTP to (8S)-3',8-cyclo-7,8-dihydroguanosine 5'-triphosphate. This Haemophilus influenzae (strain ATCC 51907 / DSM 11121 / KW20 / Rd) protein is GTP 3',8-cyclase.